Here is a 276-residue protein sequence, read N- to C-terminus: Ribonuclease 3 (276 aa).

The region spanning 30–161 is the RNase III domain; that stretch reads LTAFIRSLFK…LTGAIYLDRG (132 aa). A Mg(2+)-binding site is contributed by Glu74. The active site involves Asp78. Residues Asp147 and Glu150 each coordinate Mg(2+). Residue Glu150 is part of the active site. One can recognise a DRBM domain in the interval 188–257; it reads NHKSRLIEHT…AEEAMGALER (70 aa).

This sequence belongs to the ribonuclease III family. As to quaternary structure, homodimer. It depends on Mg(2+) as a cofactor.

It is found in the cytoplasm. The enzyme catalyses Endonucleolytic cleavage to 5'-phosphomonoester.. Functionally, digests double-stranded RNA. Involved in the processing of primary rRNA transcript to yield the immediate precursors to the large and small rRNAs (23S and 16S). Processes some mRNAs, and tRNAs when they are encoded in the rRNA operon. Processes pre-crRNA and tracrRNA of type II CRISPR loci if present in the organism. This is Ribonuclease 3 from Chlorobium luteolum (strain DSM 273 / BCRC 81028 / 2530) (Pelodictyon luteolum).